We begin with the raw amino-acid sequence, 300 residues long: MGMQGRSFARQIRAYVSLTKPRVVELLLLTTVPTMILAQRGVPNPLSVLSVLLGGAMSAGAAGAFNCYIDRDIDSKMSRTRNRPLVTGALSPKASLIFAWMLCVISVLWFLLFVNWLSALLSAIAVFLYAFFYSIVLKKRTPQNIVWGGLAGCMPVLIAWAAVTGSIDWPAIVLFAVVFLWTPPHYWPLSIHYSEDYRLTSIPMLGAIFPRKLVVLQVLLYAFAVVACTLLLIPVAHMTPLYGLFSAVLGAWFVYEIYRLYVRVVRGHEIKAMHIFSLSNTYLSLVFLSVGIDGVVSQLL.

The next 9 helical transmembrane spans lie at 21–43 (PRVVELLLLTTVPTMILAQRGVP), 45–65 (PLSVLSVLLGGAMSAGAAGAF), 94–114 (ASLIFAWMLCVISVLWFLLFV), 117–137 (LSALLSAIAVFLYAFFYSIVL), 145–167 (IVWGGLAGCMPVLIAWAAVTGSI), 171–193 (AIVLFAVVFLWTPPHYWPLSIHY), 213–233 (LVVLQVLLYAFAVVACTLLLI), 235–255 (VAHMTPLYGLFSAVLGAWFVY), and 272–292 (AMHIFSLSNTYLSLVFLSVGI).

This sequence belongs to the UbiA prenyltransferase family. Protoheme IX farnesyltransferase subfamily.

It localises to the cell membrane. The enzyme catalyses heme b + (2E,6E)-farnesyl diphosphate + H2O = Fe(II)-heme o + diphosphate. Its pathway is porphyrin-containing compound metabolism; heme O biosynthesis; heme O from protoheme: step 1/1. In terms of biological role, converts heme B (protoheme IX) to heme O by substitution of the vinyl group on carbon 2 of heme B porphyrin ring with a hydroxyethyl farnesyl side group. The chain is Protoheme IX farnesyltransferase from Tropheryma whipplei (strain TW08/27) (Whipple's bacillus).